The following is a 100-amino-acid chain: Urease subunit gamma (100 aa).

This sequence belongs to the urease gamma subunit family. Heterotrimer of UreA (gamma), UreB (beta) and UreC (alpha) subunits. Three heterotrimers associate to form the active enzyme.

Its subcellular location is the cytoplasm. The enzyme catalyses urea + 2 H2O + H(+) = hydrogencarbonate + 2 NH4(+). It participates in nitrogen metabolism; urea degradation; CO(2) and NH(3) from urea (urease route): step 1/1. This chain is Urease subunit gamma, found in Mesorhizobium japonicum (strain LMG 29417 / CECT 9101 / MAFF 303099) (Mesorhizobium loti (strain MAFF 303099)).